A 75-amino-acid polypeptide reads, in one-letter code: Sec-independent protein translocase protein TatA (75 aa).

A helical transmembrane segment spans residues 1 to 21 (MGSFSIWHWLVVLAIVLLVFG). Residues 41 to 75 (KGMRDEDKPNAQLGDESRTQDASRTAQDEHDRNAR) form a disordered region.

It belongs to the TatA/E family. As to quaternary structure, the Tat system comprises two distinct complexes: a TatABC complex, containing multiple copies of TatA, TatB and TatC subunits, and a separate TatA complex, containing only TatA subunits. Substrates initially bind to the TatABC complex, which probably triggers association of the separate TatA complex to form the active translocon.

It is found in the cell inner membrane. Part of the twin-arginine translocation (Tat) system that transports large folded proteins containing a characteristic twin-arginine motif in their signal peptide across membranes. TatA could form the protein-conducting channel of the Tat system. The protein is Sec-independent protein translocase protein TatA of Stenotrophomonas maltophilia (strain K279a).